A 212-amino-acid polypeptide reads, in one-letter code: Ribonuclease HII (212 aa).

In terms of domain architecture, RNase H type-2 spans 24–212 (QLVAGVDEVG…PVKKALGIEE (189 aa)). A divalent metal cation contacts are provided by aspartate 30, glutamate 31, and aspartate 122.

It belongs to the RNase HII family. The cofactor is Mn(2+). Requires Mg(2+) as cofactor.

The protein resides in the cytoplasm. The enzyme catalyses Endonucleolytic cleavage to 5'-phosphomonoester.. Functionally, endonuclease that specifically degrades the RNA of RNA-DNA hybrids. The chain is Ribonuclease HII from Vibrio campbellii (strain ATCC BAA-1116).